Reading from the N-terminus, the 376-residue chain is Succinate--CoA ligase [ADP-forming] subunit beta (376 aa).

The 229-residue stretch at 9–237 (KEIFSKYGIP…PTEEEKVEAD (229 aa)) folds into the ATP-grasp domain. ATP-binding positions include Lys46, 53-55 (GRG), Val95, and Glu100. 2 residues coordinate Mg(2+): Asn192 and Asp206. Substrate is bound by residues Asn257 and 314-316 (GIT).

The protein belongs to the succinate/malate CoA ligase beta subunit family. As to quaternary structure, heterotetramer of two alpha and two beta subunits. The cofactor is Mg(2+).

The enzyme catalyses succinate + ATP + CoA = succinyl-CoA + ADP + phosphate. It catalyses the reaction GTP + succinate + CoA = succinyl-CoA + GDP + phosphate. Its pathway is carbohydrate metabolism; tricarboxylic acid cycle; succinate from succinyl-CoA (ligase route): step 1/1. Succinyl-CoA synthetase functions in the citric acid cycle (TCA), coupling the hydrolysis of succinyl-CoA to the synthesis of either ATP or GTP and thus represents the only step of substrate-level phosphorylation in the TCA. The beta subunit provides nucleotide specificity of the enzyme and binds the substrate succinate, while the binding sites for coenzyme A and phosphate are found in the alpha subunit. This chain is Succinate--CoA ligase [ADP-forming] subunit beta, found in Bacteroides thetaiotaomicron (strain ATCC 29148 / DSM 2079 / JCM 5827 / CCUG 10774 / NCTC 10582 / VPI-5482 / E50).